Here is a 409-residue protein sequence, read N- to C-terminus: Ribose-phosphate pyrophosphokinase 1 (409 aa).

Asp-128, His-130, and Asp-143 together coordinate Mg(2+). Ser-199 is subject to Phosphoserine.

It belongs to the ribose-phosphate pyrophosphokinase family.

The protein localises to the cytoplasm. It catalyses the reaction D-ribose 5-phosphate + ATP = 5-phospho-alpha-D-ribose 1-diphosphate + AMP + H(+). Its pathway is metabolic intermediate biosynthesis; 5-phospho-alpha-D-ribose 1-diphosphate biosynthesis; 5-phospho-alpha-D-ribose 1-diphosphate from D-ribose 5-phosphate (route I): step 1/1. Its function is as follows. 5-phosphoribose 1-diphosphate synthase involved in nucleotide, histidine, and tryptophan biosynthesis. Active in heteromultimeric complexes with other 5-phosphoribose 1-diphosphate synthases. The sequence is that of Ribose-phosphate pyrophosphokinase 1 from Schizosaccharomyces pombe (strain 972 / ATCC 24843) (Fission yeast).